The following is a 152-amino-acid chain: Small ribosomal subunit protein uS17A (152 aa).

It belongs to the universal ribosomal protein uS17 family. In terms of assembly, component of the small ribosomal subunit (SSU). Mature yeast ribosomes consist of a small (40S) and a large (60S) subunit. The 40S small subunit contains 1 molecule of ribosomal RNA (18S rRNA) and at least 33 different proteins. The large 60S subunit contains 3 rRNA molecules (25S, 5.8S and 5S rRNA) and at least 46 different proteins.

It is found in the cytoplasm. The protein resides in the nucleus. Functionally, component of the ribosome, a large ribonucleoprotein complex responsible for the synthesis of proteins in the cell. The small ribosomal subunit (SSU) binds messenger RNAs (mRNAs) and translates the encoded message by selecting cognate aminoacyl-transfer RNA (tRNA) molecules. The large subunit (LSU) contains the ribosomal catalytic site termed the peptidyl transferase center (PTC), which catalyzes the formation of peptide bonds, thereby polymerizing the amino acids delivered by tRNAs into a polypeptide chain. The nascent polypeptides leave the ribosome through a tunnel in the LSU and interact with protein factors that function in enzymatic processing, targeting, and the membrane insertion of nascent chains at the exit of the ribosomal tunnel. The polypeptide is Small ribosomal subunit protein uS17A (rps1101) (Schizosaccharomyces pombe (strain 972 / ATCC 24843) (Fission yeast)).